Here is a 70-residue protein sequence, read N- to C-terminus: Cold shock-like protein CspI (70 aa).

Residues 7 to 67 (GLVKWFNPEK…GPKGPAAVHV (61 aa)) form the CSD domain.

The protein resides in the cytoplasm. In Escherichia coli O6:H1 (strain CFT073 / ATCC 700928 / UPEC), this protein is Cold shock-like protein CspI (cspI).